Here is a 506-residue protein sequence, read N- to C-terminus: MIYPIPNSETSTVHFKDVYDNYIGGQWMKPHSGEYFSNTSPVNGLVFCRVARSSSQDVELALDAAHNALESWSTTSAVERSNILLRIADRIESNLETLAIVESWDNGKPIRETLAADLPLTIDHFRYFAACIRSQEGAASELDSRTLTYHLPEPIGVVGQIIPWNFPLLMAAWKLAPALAAGCTVVLKPAEQTPVSILFLMEIIGDLIPAGVINVVNGFGSEAGNALATSQRIDKLAFTGSTEIGNHILKCAADNLIPSTIELGGKSPNIYFPDIFSHEDQYLDKCIEGALLAFFNQGEVCTCPSRILVHESIYEKFIAKIIERVALIKQGNPLDTETQIGAQVSKEQYDKILGYIQIGKDEGAELIFGGHPNNQENYLSGGYYIKPTLFFGHNQMHIFQEEIFGPVIAITKFKDEIEALHLANDTVYGLGAGVWTRDINIAHRMAKNIKAGRVWVNCYHAYPAHAAFGGYKKSGIGRETHKLTLSHYQNIKNVLISHEIHPLGLF.

240-245 (GSTEIG) provides a ligand contact to NAD(+). Active-site residues include E262 and C301.

Belongs to the aldehyde dehydrogenase family.

The catalysed reaction is an aldehyde + NAD(+) + H2O = a carboxylate + NADH + 2 H(+). It functions in the pathway alcohol metabolism; ethanol degradation; acetate from ethanol: step 2/2. May be involved in V.cholerae virulence, as its expression is under the control of ToxR, a transcriptional activator of several genes associated with virulence. This Vibrio cholerae serotype O1 (strain ATCC 39541 / Classical Ogawa 395 / O395) protein is Aldehyde dehydrogenase (aldA).